Here is a 531-residue protein sequence, read N- to C-terminus: HERV-H LTR-associating protein 1 (531 aa).

Positions 1–29 (MLGFLSRGPSMKLCMGLACVLSLWNTVSG) are cleaved as a signal peptide. 3 N-linked (GlcNAc...) asparagine glycosylation sites follow: N79, N143, and N161. Disordered regions lie at residues 231-289 (GTAR…RPPE) and 340-362 (EKKP…GTEE). 2 stretches are compositionally biased toward polar residues: residues 232–269 (TART…SSPW) and 349–362 (ETRS…GTEE).

The protein localises to the secreted. This is HERV-H LTR-associating protein 1 (HHLA1) from Homo sapiens (Human).